The primary structure comprises 304 residues: Acetyl-coenzyme A carboxylase carboxyl transferase subunit beta (304 aa).

In terms of domain architecture, CoA carboxyltransferase N-terminal spans 29 to 298 (LWTKCVSCAA…QAYRPSPQAS (270 aa)). Zn(2+)-binding residues include C33, C36, C52, and C55. The segment at 33–55 (CVSCAALHYTKDFQLNLCVCPAC) adopts a C4-type zinc-finger fold.

It belongs to the AccD/PCCB family. As to quaternary structure, acetyl-CoA carboxylase is a heterohexamer composed of biotin carboxyl carrier protein (AccB), biotin carboxylase (AccC) and two subunits each of ACCase subunit alpha (AccA) and ACCase subunit beta (AccD). Zn(2+) is required as a cofactor.

Its subcellular location is the cytoplasm. It carries out the reaction N(6)-carboxybiotinyl-L-lysyl-[protein] + acetyl-CoA = N(6)-biotinyl-L-lysyl-[protein] + malonyl-CoA. Its pathway is lipid metabolism; malonyl-CoA biosynthesis; malonyl-CoA from acetyl-CoA: step 1/1. Component of the acetyl coenzyme A carboxylase (ACC) complex. Biotin carboxylase (BC) catalyzes the carboxylation of biotin on its carrier protein (BCCP) and then the CO(2) group is transferred by the transcarboxylase to acetyl-CoA to form malonyl-CoA. This is Acetyl-coenzyme A carboxylase carboxyl transferase subunit beta from Gloeobacter violaceus (strain ATCC 29082 / PCC 7421).